Reading from the N-terminus, the 460-residue chain is 3-isopropylmalate dehydratase large subunit (460 aa).

Cys338, Cys398, and Cys401 together coordinate [4Fe-4S] cluster.

It belongs to the aconitase/IPM isomerase family. LeuC type 1 subfamily. As to quaternary structure, heterodimer of LeuC and LeuD. The cofactor is [4Fe-4S] cluster.

The enzyme catalyses (2R,3S)-3-isopropylmalate = (2S)-2-isopropylmalate. It functions in the pathway amino-acid biosynthesis; L-leucine biosynthesis; L-leucine from 3-methyl-2-oxobutanoate: step 2/4. Catalyzes the isomerization between 2-isopropylmalate and 3-isopropylmalate, via the formation of 2-isopropylmaleate. The sequence is that of 3-isopropylmalate dehydratase large subunit from Streptococcus thermophilus (strain CNRZ 1066).